The chain runs to 498 residues: ATP synthase subunit beta, chloroplastic (498 aa).

172–179 lines the ATP pocket; it reads GGAGVGKT.

It belongs to the ATPase alpha/beta chains family. F-type ATPases have 2 components, CF(1) - the catalytic core - and CF(0) - the membrane proton channel. CF(1) has five subunits: alpha(3), beta(3), gamma(1), delta(1), epsilon(1). CF(0) has four main subunits: a(1), b(1), b'(1) and c(9-12).

It localises to the plastid. The protein localises to the chloroplast thylakoid membrane. The catalysed reaction is ATP + H2O + 4 H(+)(in) = ADP + phosphate + 5 H(+)(out). Produces ATP from ADP in the presence of a proton gradient across the membrane. The catalytic sites are hosted primarily by the beta subunits. The protein is ATP synthase subunit beta, chloroplastic of Solanum bulbocastanum (Wild potato).